Reading from the N-terminus, the 382-residue chain is ATP phosphoribosyltransferase regulatory subunit (382 aa).

This sequence belongs to the class-II aminoacyl-tRNA synthetase family. HisZ subfamily. As to quaternary structure, heteromultimer composed of HisG and HisZ subunits.

The protein localises to the cytoplasm. The protein operates within amino-acid biosynthesis; L-histidine biosynthesis; L-histidine from 5-phospho-alpha-D-ribose 1-diphosphate: step 1/9. In terms of biological role, required for the first step of histidine biosynthesis. May allow the feedback regulation of ATP phosphoribosyltransferase activity by histidine. The polypeptide is ATP phosphoribosyltransferase regulatory subunit (Burkholderia pseudomallei (strain 668)).